The primary structure comprises 76 residues: Putative defensin-like protein 184 (76 aa).

A signal peptide spans 1-21 (MKNSSILFVLIIVVFLISSSG). Disulfide bonds link Cys-32–Cys-76, Cys-38–Cys-58, Cys-44–Cys-70, and Cys-48–Cys-72.

This sequence belongs to the DEFL family.

Its subcellular location is the secreted. The polypeptide is Putative defensin-like protein 184 (LCR18) (Arabidopsis thaliana (Mouse-ear cress)).